A 544-amino-acid polypeptide reads, in one-letter code: Probable protein kinase UbiB (544 aa).

In terms of domain architecture, Protein kinase spans 123-501; it reads DFDIKPLASA…KRQQAKGQFL (379 aa). Residues 129–137 and K152 each bind ATP; that span reads LASASIAQV. D287 functions as the Proton acceptor in the catalytic mechanism. The helical transmembrane segment at 515 to 537 threads the bilayer; that stretch reads LLTSNITVLASISAATGAAFWLF.

Belongs to the ABC1 family. UbiB subfamily.

The protein localises to the cell inner membrane. The protein operates within cofactor biosynthesis; ubiquinone biosynthesis [regulation]. Its function is as follows. Is probably a protein kinase regulator of UbiI activity which is involved in aerobic coenzyme Q (ubiquinone) biosynthesis. The protein is Probable protein kinase UbiB of Aliivibrio fischeri (strain MJ11) (Vibrio fischeri).